We begin with the raw amino-acid sequence, 191 residues long: Ribosomal RNA small subunit methyltransferase G (191 aa).

S-adenosyl-L-methionine-binding positions include G62, F67, 111–112 (IE), and R124.

It belongs to the methyltransferase superfamily. RNA methyltransferase RsmG family.

The protein resides in the cytoplasm. It carries out the reaction guanosine(527) in 16S rRNA + S-adenosyl-L-methionine = N(7)-methylguanosine(527) in 16S rRNA + S-adenosyl-L-homocysteine. In terms of biological role, specifically methylates the N7 position of guanine in position 527 of 16S rRNA. The polypeptide is Ribosomal RNA small subunit methyltransferase G (Rickettsia akari (strain Hartford)).